The primary structure comprises 501 residues: Beta-secretase 1 (501 aa).

The first 21 residues, 1 to 21 (MAPALRWLLLWVGSGMLPAQG), serve as a signal peptide directing secretion. Positions 22 to 45 (THLGIRLPLRSGLAGPPLGLRLPR) are excised as a propeptide. At 22–457 (THLGIRLPLR…PQTDESTLMT (436 aa)) the chain is on the extracellular side. Residues 75 to 416 (YYVEMTVGSP…DRARKRIGFA (342 aa)) form the Peptidase A1 domain. Residue Asp-93 is part of the active site. Lys-126 bears the N6-acetyllysine mark. Residues Asn-153, Asn-172, and Asn-223 are each glycosylated (N-linked (GlcNAc...) asparagine). Disulfide bonds link Cys-216/Cys-420, Cys-278/Cys-443, and Cys-330/Cys-380. 3 positions are modified to N6-acetyllysine: Lys-275, Lys-279, and Lys-285. Asp-289 is a catalytic residue. Lys-299, Lys-300, and Lys-307 each carry N6-acetyllysine. Asn-354 is a glycosylation site (N-linked (GlcNAc...) asparagine). The chain crosses the membrane as a helical span at residues 458–478 (IAYVMAAICALFMLPLCLMVC). 4 S-palmitoyl cysteine lipidation sites follow: Cys-474, Cys-478, Cys-482, and Cys-485. Topologically, residues 479 to 501 (QWRCLRCLRHQHDDFADDISLLK) are cytoplasmic. An interaction with RTN3 region spans residues 479–501 (QWRCLRCLRHQHDDFADDISLLK). A DXXLL motif is present at residues 496–500 (DISLL). At Ser-498 the chain carries Phosphoserine. Lys-501 is covalently cross-linked (Glycyl lysine isopeptide (Lys-Gly) (interchain with G-Cter in ubiquitin)).

Belongs to the peptidase A1 family. As to quaternary structure, monomer. Interacts (via DXXLL motif) with GGA1, GGA2 and GGA3 (via their VHS domain); the interaction highly increases when BACE1 is phosphorylated at Ser-498. Interacts with RTN1; RTN2; RTN3 and RTN4; the interaction leads to inhibition of amyloid precursor protein processing. Interacts with SNX6. Interacts with PCSK9. Interacts with NAT8 and NAT8B. Interacts with BIN1. Interacts (via extracellular domain) with ADAM10 (via extracellular domain). Interacts with SORL1; this interaction may affect binding with APP and hence reduce APP cleavage. Interacts with NRDC AND NRG1. In terms of processing, palmitoylation mediates lipid raft localization. Post-translationally, acetylated in the endoplasmic reticulum at Lys-126, Lys-275, Lys-279, Lys-285, Lys-299, Lys-300 and Lys-307. Acetylation by NAT8 and NAT8B is transient and deacetylation probably occurs in the Golgi. Acetylation regulates the maturation, the transport to the plasma membrane, the stability and the expression of the protein. Ubiquitinated at Lys-501, ubiquitination leads to lysosomal degradation. Monoubiquitinated and 'Lys-63'-linked polyubitinated. Deubiquitnated by USP8; inhibits lysosomal degradation. In terms of processing, phosphorylation at Ser-498 is required for interaction with GGA1 and retrograded transport from endosomal compartments to the trans-Golgi network. Non-phosphorylated BACE1 enters a direct recycling route to the cell surface. Post-translationally, N-Glycosylated. Addition of a bisecting N-acetylglucosamine by MGAT3 blocks lysosomal targeting, further degradation and is required for maintaining stability under stress conditions.

It is found in the cell membrane. Its subcellular location is the golgi apparatus. The protein localises to the trans-Golgi network. The protein resides in the endoplasmic reticulum. It localises to the endosome. It is found in the cell surface. Its subcellular location is the cytoplasmic vesicle membrane. The protein localises to the membrane raft. The protein resides in the lysosome. It localises to the late endosome. It is found in the early endosome. Its subcellular location is the recycling endosome. The protein localises to the cell projection. The protein resides in the axon. It localises to the dendrite. The enzyme catalyses Broad endopeptidase specificity. Cleaves Glu-Val-Asn-Leu-|-Asp-Ala-Glu-Phe in the Swedish variant of Alzheimer's amyloid precursor protein.. Its activity is regulated as follows. Inhibited by RTN3 and RTN4. Functionally, responsible for the proteolytic processing of the amyloid precursor protein (APP). Cleaves at the N-terminus of the A-beta peptide sequence, between residues 671 and 672 of APP, leads to the generation and extracellular release of beta-cleaved soluble APP, and a corresponding cell-associated C-terminal fragment which is later released by gamma-secretase. Cleaves CHL1. This Rattus norvegicus (Rat) protein is Beta-secretase 1 (Bace1).